We begin with the raw amino-acid sequence, 93 residues long: Small ribosomal subunit protein uS19 (93 aa).

The protein belongs to the universal ribosomal protein uS19 family.

Functionally, protein S19 forms a complex with S13 that binds strongly to the 16S ribosomal RNA. In Dehalococcoides mccartyi (strain ATCC BAA-2266 / KCTC 15142 / 195) (Dehalococcoides ethenogenes (strain 195)), this protein is Small ribosomal subunit protein uS19.